The primary structure comprises 147 residues: Globin (147 aa).

The Globin domain maps to 1–147 (GLSAEQKTAL…LLGVLIENHQ (147 aa)). Residues histidine 66 and histidine 98 each coordinate heme b.

It belongs to the globin family. As to quaternary structure, homodimer.

The protein is Globin of Tritia mutabilis (Sea snail).